A 454-amino-acid chain; its full sequence is Protoheme IX farnesyltransferase 1 (454 aa).

The segment at 1-186 (MRTTGFSGLL…AYFELTKPRL (186 aa)) is unknown. 4 helical membrane-spanning segments follow: residues 9–29 (LLSA…TAAL), 59–79 (GVAA…WSET), 87–107 (LALA…VATG), and 113–133 (LHLF…AWHL). Residues 137 to 164 (TGSDDAPESPPELAPPVDEEPAATEQPA) form a disordered region. Helical transmembrane passes span 186–206 (LMWL…TPTV), 209–229 (VVFT…FNHV), 251–271 (VPVA…LWAF), 276–296 (LLAA…YTLI), 300–320 (NTVQ…LIGY), 321–341 (AAVT…IFLW), 377–397 (HIVF…AVTD), 398–418 (LGWL…WAVV), and 433–453 (FHAS…DSLA). Residues 187 to 451 (MWLLCLVAGA…LVLVAILIDS (265 aa)) form a protoheme IX prenyltransferase region.

The protein in the C-terminal section; belongs to the UbiA prenyltransferase family. Protoheme IX farnesyltransferase subfamily.

It localises to the cell membrane. The catalysed reaction is heme b + (2E,6E)-farnesyl diphosphate + H2O = Fe(II)-heme o + diphosphate. It functions in the pathway porphyrin-containing compound metabolism; heme O biosynthesis; heme O from protoheme: step 1/1. In terms of biological role, converts heme B (protoheme IX) to heme O by substitution of the vinyl group on carbon 2 of heme B porphyrin ring with a hydroxyethyl farnesyl side group. The protein is Protoheme IX farnesyltransferase 1 (ctaB1) of Natronomonas pharaonis (strain ATCC 35678 / DSM 2160 / CIP 103997 / JCM 8858 / NBRC 14720 / NCIMB 2260 / Gabara) (Halobacterium pharaonis).